The chain runs to 356 residues: NAC domain-containing protein JA2L (356 aa).

Residues 14–162 enclose the NAC domain; the sequence is LPPGFRFYPT…DWVLCRIYKK (149 aa). A DNA-binding region spans residues 111–168; that stretch reads VGIKKALVFYIGKAPKGTKTNWIMHEYRLSEPTTKTGSSRLDDWVLCRIYKKNSGGQK. The tract at residues 163–191 is disordered; that stretch reads NSGGQKSSCSDLQNKDISHASSSSSSSQF. Positions 164-174 are enriched in polar residues; it reads SGGQKSSCSDL.

As to expression, expressed in guard cells of the epidermis.

Its subcellular location is the nucleus. Its function is as follows. Transcription factor that acts downstream of MYC2 in the jasmonate-mediated response to Botrytis cinerea infection. With MYC2 forms a transcription module that regulates wounding-responsive genes. Involved in jasmonate- and coronatine-mediated stomatal reopening in response to Pseudomonas syringae pv tomato DC3000 infection. Regulates the expression of threonine deaminase 2 (TD2) through promoter binding. In Solanum lycopersicum (Tomato), this protein is NAC domain-containing protein JA2L.